Reading from the N-terminus, the 403-residue chain is D-galactonate dehydratase family member ManD (403 aa).

Residues Asn-37 and His-122 each coordinate substrate. Residue Tyr-159 is the Proton donor/acceptor of the active site. Asp-211 serves as a coordination point for Mg(2+). His-213 acts as the Proton donor/acceptor in catalysis. Positions 237 and 263 each coordinate Mg(2+). Substrate-binding residues include Glu-263, Arg-284, His-313, Asp-317, and Glu-340.

The protein belongs to the mandelate racemase/muconate lactonizing enzyme family. GalD subfamily. The cofactor is Mg(2+).

It carries out the reaction D-mannonate = 2-dehydro-3-deoxy-D-gluconate + H2O. It catalyses the reaction D-gluconate = 2-dehydro-3-deoxy-D-gluconate + H2O. Its function is as follows. Has low dehydratase activity with D-mannonate and D-gluconate, suggesting that these are not physiological substrates and that it has no significant role in the in vivo degradation of these compounds. Has no detectable activity with a panel of 70 other acid sugars (in vitro). In Chromohalobacter salexigens (strain ATCC BAA-138 / DSM 3043 / CIP 106854 / NCIMB 13768 / 1H11), this protein is D-galactonate dehydratase family member ManD (manD).